A 242-amino-acid polypeptide reads, in one-letter code: Beta-carotene ketolase (242 aa).

It carries out the reaction all-trans-beta-carotene + 2 AH2 + 2 O2 = echinenone + 2 A + 3 H2O. It catalyses the reaction echinenone + 2 AH2 + 2 O2 = canthaxanthin + 2 A + 3 H2O. It participates in carotenoid biosynthesis; astaxanthin biosynthesis. Functionally, converts beta-carotene to canthaxanthin via echinenone. In Paracoccus sp. (strain PC1) (Alcaligenes sp. (strain PC1)), this protein is Beta-carotene ketolase.